Consider the following 419-residue polypeptide: N-acylneuraminate cytidylyltransferase (419 aa).

Belongs to the CMP-NeuNAc synthase family. Monomer. May form aggregates. The cofactor is Mg(2+). It depends on Mn(2+) as a cofactor.

Its subcellular location is the cytoplasm. It carries out the reaction an N-acylneuraminate + CTP = a CMP-N-acyl-beta-neuraminate + diphosphate. Its activity is regulated as follows. Inhibited by the CTP analogs 5-mercuri-CTP and CTP-2',3'-dialdehyde. Catalyzes the formation of CMP-N-acetylneuraminic acid (CMP-NeuNAc), which is essential for the formation of the capsule. The protein is N-acylneuraminate cytidylyltransferase (neuA) of Escherichia coli O18:K1:H7 (strain RS218 / NMEC).